The primary structure comprises 321 residues: Arabinan endo-1,5-alpha-L-arabinosidase A (321 aa).

The first 19 residues, 1–19, serve as a signal peptide directing secretion; it reads MYSLLTALSVPLLAGLAHG. The Proton acceptor role is filled by Asp34. Residue Asn192 is glycosylated (N-linked (GlcNAc...) asparagine). Residue Glu200 is the Proton donor of the active site.

The protein belongs to the glycosyl hydrolase 43 family.

It localises to the secreted. The catalysed reaction is Endohydrolysis of (1-&gt;5)-alpha-arabinofuranosidic linkages in (1-&gt;5)-arabinans.. The protein operates within glycan metabolism; L-arabinan degradation. In terms of biological role, endo-1,5-alpha-L-arabinanase involved in degradation of pectin. Its preferred substrate is linear 1,5-alpha-L-arabinan. This Aspergillus aculeatus protein is Arabinan endo-1,5-alpha-L-arabinosidase A (abnA).